We begin with the raw amino-acid sequence, 67 residues long: Potassium channel toxin alpha-KTx 6.16 (67 aa).

Residues 1–24 form the signal peptide; the sequence is MNLKLALVLLLTVINVGMLPGATS. Cystine bridges form between cysteine 34/cysteine 55, cysteine 40/cysteine 60, cysteine 44/cysteine 62, and cysteine 50/cysteine 65.

The protein belongs to the short scorpion toxin superfamily. Potassium channel inhibitor family. Alpha-KTx 06 subfamily. In terms of tissue distribution, expressed by the venom gland.

The protein localises to the secreted. In terms of biological role, inhibits voltage-gated potassium channels. The sequence is that of Potassium channel toxin alpha-KTx 6.16 from Opisthacanthus cayaporum (South American scorpion).